A 307-amino-acid polypeptide reads, in one-letter code: Protoheme IX farnesyltransferase (307 aa).

Transmembrane regions (helical) follow at residues 31–51 (VTQL…PGMV), 55–75 (VLIG…AINC), 103–123 (TLVF…VYAN), 125–145 (LTMW…TILL), 153–173 (IVIG…AVAG), 179–199 (AWFL…ALAL), 223–243 (LLHI…PFVY), 246–266 (SGYI…AYAW), and 285–305 (ILYL…KFVP).

This sequence belongs to the UbiA prenyltransferase family. Protoheme IX farnesyltransferase subfamily.

The protein resides in the cell inner membrane. It carries out the reaction heme b + (2E,6E)-farnesyl diphosphate + H2O = Fe(II)-heme o + diphosphate. Its pathway is porphyrin-containing compound metabolism; heme O biosynthesis; heme O from protoheme: step 1/1. Functionally, converts heme B (protoheme IX) to heme O by substitution of the vinyl group on carbon 2 of heme B porphyrin ring with a hydroxyethyl farnesyl side group. This is Protoheme IX farnesyltransferase from Cupriavidus necator (strain ATCC 17699 / DSM 428 / KCTC 22496 / NCIMB 10442 / H16 / Stanier 337) (Ralstonia eutropha).